The sequence spans 459 residues: Protein YTP1 (459 aa).

The Extracellular portion of the chain corresponds to 1 to 6; it reads MTAANK. Residues 7-27 traverse the membrane as a helical segment; the sequence is NIVFGFSRSISAILLICFFFE. At 28–59 the chain is on the cytoplasmic side; that stretch reads KVCGDMEHDMGMDDTSGYTRPEIVQAGSKSFH. Residues 60–80 form a helical membrane-spanning segment; sequence WLCTLGFLLLLPSVVTCLSFA. Residues 81-82 are Extracellular-facing; that stretch reads GR. Residues 83-103 traverse the membrane as a helical segment; it reads IYSATLLQCTCAVYAFLEAAV. Over 104–122 the chain is Cytoplasmic; that stretch reads LRFQDNDGVENRTSRGTAW. Residues 123–143 traverse the membrane as a helical segment; the sequence is FLVGLTWITLFFGGLAGGTGF. Topologically, residues 144–170 are extracellular; that stretch reads LVKSKRLQTFISNAGEKRLSYIHRGLS. A helical membrane pass occupies residues 171–191; that stretch reads FLTVLTGWVKVCLAPVALFGF. Over 192–205 the chain is Cytoplasmic; sequence CREAHTGQCIAHGI. A helical transmembrane segment spans residues 206–226; the sequence is MGSAFVLYGFIYVLVLVIPWI. Over 227 to 266 the chain is Extracellular; the sequence is RSAQTSYSQDYVDSWVMCIWGVVNTFTEHRWGREGWSVHD. Residues 267–287 traverse the membrane as a helical segment; it reads YQHTFMGIIWWTGGILGIFLS. Residues 288–295 are Cytoplasmic-facing; the sequence is RNGRRTFV. A helical transmembrane segment spans residues 296–316; sequence PSLIIIFTGWAMSEHAQHLII. The Extracellular portion of the chain corresponds to 317-322; the sequence is STKVHN. Residues 323–343 traverse the membrane as a helical segment; sequence MFGLVLMCGGALRIIEISFLL. Topologically, residues 344–351 are cytoplasmic; the sequence is RDKRTLDK. The chain crosses the membrane as a helical span at residues 352-372; the sequence is IHSFQYLAPFCLVCSGLLFMG. The Extracellular segment spans residues 373–389; the sequence is ANEEQLILVLRLGGDHS. A helical transmembrane segment spans residues 390 to 410; it reads AYVLIIVSGAFLVYFWMIACL. Over 411 to 459 the chain is Cytoplasmic; sequence EFYLYLLEKGKQGFLPKSYELEEENNNVSFELDNISNEDVDEDTTPFNV.

The protein localises to the membrane. This is Protein YTP1 (YTP1) from Saccharomyces cerevisiae (strain ATCC 204508 / S288c) (Baker's yeast).